A 498-amino-acid polypeptide reads, in one-letter code: Bifunctional protein GlmU (498 aa).

Residues 1–238 (MSDAAVVILA…PALVAGVNDR (238 aa)) form a pyrophosphorylase region. Residues 9–12 (LAAG), Lys-23, Gln-80, and 85–86 (GT) contribute to the UDP-N-acetyl-alpha-D-glucosamine site. Position 111 (Asp-111) interacts with Mg(2+). Residues Gly-148, Glu-163, Asn-178, and Asn-236 each contribute to the UDP-N-acetyl-alpha-D-glucosamine site. Asn-236 lines the Mg(2+) pocket. Residues 239–259 (VQLADLGAELNRRVVAAHQRA) are linker. Residues 260-498 (GVTIVDPATT…TAKPAPATGE (239 aa)) form an N-acetyltransferase region. Residues Arg-341 and Lys-359 each contribute to the UDP-N-acetyl-alpha-D-glucosamine site. The active-site Proton acceptor is His-371. 2 residues coordinate UDP-N-acetyl-alpha-D-glucosamine: Tyr-374 and Asn-385. Acetyl-CoA is bound by residues Ala-388, 394-395 (NY), Ser-413, and Ala-431. Residues 470–498 (AAEAAAADGDTAAADRAAATAKPAPATGE) form a disordered region.

The protein in the N-terminal section; belongs to the N-acetylglucosamine-1-phosphate uridyltransferase family. In the C-terminal section; belongs to the transferase hexapeptide repeat family. As to quaternary structure, homotrimer. Mg(2+) is required as a cofactor.

The protein localises to the cytoplasm. The enzyme catalyses alpha-D-glucosamine 1-phosphate + acetyl-CoA = N-acetyl-alpha-D-glucosamine 1-phosphate + CoA + H(+). The catalysed reaction is N-acetyl-alpha-D-glucosamine 1-phosphate + UTP + H(+) = UDP-N-acetyl-alpha-D-glucosamine + diphosphate. The protein operates within nucleotide-sugar biosynthesis; UDP-N-acetyl-alpha-D-glucosamine biosynthesis; N-acetyl-alpha-D-glucosamine 1-phosphate from alpha-D-glucosamine 6-phosphate (route II): step 2/2. It functions in the pathway nucleotide-sugar biosynthesis; UDP-N-acetyl-alpha-D-glucosamine biosynthesis; UDP-N-acetyl-alpha-D-glucosamine from N-acetyl-alpha-D-glucosamine 1-phosphate: step 1/1. It participates in bacterial outer membrane biogenesis; LPS lipid A biosynthesis. Its function is as follows. Catalyzes the last two sequential reactions in the de novo biosynthetic pathway for UDP-N-acetylglucosamine (UDP-GlcNAc). The C-terminal domain catalyzes the transfer of acetyl group from acetyl coenzyme A to glucosamine-1-phosphate (GlcN-1-P) to produce N-acetylglucosamine-1-phosphate (GlcNAc-1-P), which is converted into UDP-GlcNAc by the transfer of uridine 5-monophosphate (from uridine 5-triphosphate), a reaction catalyzed by the N-terminal domain. This Mycolicibacterium gilvum (strain PYR-GCK) (Mycobacterium gilvum (strain PYR-GCK)) protein is Bifunctional protein GlmU.